The chain runs to 425 residues: GPI mannosyltransferase 1 (425 aa).

Helical transmembrane passes span 11–31 (VIGASIALRAVLLVYGAWQDA), 85–105 (FFAFGKALFALADVVAGWLIA), 144–164 (LLGVLVVGLLWAVLSRRVSLA), 166–186 (VILGLGVHFKIYPFIYGPAVV), 233–253 (IHLTLVALATFSALNVSMYIL), 295–315 (FESLAFIPQLLLSVVVIPLVL), 340–360 (SQYFLWYLIFLPFYLPSSSLM), 367–387 (ILVGLLWVIAQALWLQQGYNL), and 398–418 (GLFLASLFFFAVNVWILGIIV).

It belongs to the PIGM family.

The protein localises to the endoplasmic reticulum membrane. Its pathway is glycolipid biosynthesis; glycosylphosphatidylinositol-anchor biosynthesis. In terms of biological role, mannosyltransferase involved in glycosylphosphatidylinositol-anchor biosynthesis. Transfers the first alpha-1,4-mannose to GlcN-acyl-PI during GPI precursor assembly. Required for cell wall integrity. The protein is GPI mannosyltransferase 1 (gpi14) of Aspergillus fumigatus (strain ATCC MYA-4609 / CBS 101355 / FGSC A1100 / Af293) (Neosartorya fumigata).